Consider the following 273-residue polypeptide: Nickel import ATP-binding protein NikE (273 aa).

Positions 13-252 (YRTGGLLRKR…AHPVGRQLQA (240 aa)) constitute an ABC transporter domain. 45 to 52 (GSSGSGKS) lines the ATP pocket.

The protein belongs to the ABC transporter superfamily. Nickel importer (TC 3.A.1.5.3) family. In terms of assembly, the complex is composed of two ATP-binding proteins (NikD and NikE), two transmembrane proteins (NikB and NikC) and a solute-binding protein (NikA).

The protein localises to the cell inner membrane. The catalysed reaction is Ni(2+)(out) + ATP + H2O = Ni(2+)(in) + ADP + phosphate + H(+). Its function is as follows. Part of the ABC transporter complex NikABCDE involved in nickel import. Responsible for energy coupling to the transport system. The sequence is that of Nickel import ATP-binding protein NikE from Pseudomonas putida (strain ATCC 47054 / DSM 6125 / CFBP 8728 / NCIMB 11950 / KT2440).